The chain runs to 559 residues: Sporulation protein kinase mde3 (559 aa).

The region spanning 21–323 (YLVKQKLGDG…TAKYCKEVFF (303 aa)) is the Protein kinase domain. Residues 27–35 (LGDGSFGTV) and lysine 53 contribute to the ATP site. Aspartate 150 acts as the Proton acceptor in catalysis.

Belongs to the protein kinase superfamily. Ser/Thr protein kinase family.

It catalyses the reaction L-seryl-[protein] + ATP = O-phospho-L-seryl-[protein] + ADP + H(+). The catalysed reaction is L-threonyl-[protein] + ATP = O-phospho-L-threonyl-[protein] + ADP + H(+). Functionally, protein kinase which is essential for spore formation. In Schizosaccharomyces pombe (strain 972 / ATCC 24843) (Fission yeast), this protein is Sporulation protein kinase mde3 (mde3).